Here is a 69-residue protein sequence, read N- to C-terminus: NAD(P)H-quinone oxidoreductase subunit O (69 aa).

Belongs to the complex I NdhO subunit family. NDH-1 can be composed of about 15 different subunits; different subcomplexes with different compositions have been identified which probably have different functions.

Its subcellular location is the cellular thylakoid membrane. The enzyme catalyses a plastoquinone + NADH + (n+1) H(+)(in) = a plastoquinol + NAD(+) + n H(+)(out). It carries out the reaction a plastoquinone + NADPH + (n+1) H(+)(in) = a plastoquinol + NADP(+) + n H(+)(out). NDH-1 shuttles electrons from an unknown electron donor, via FMN and iron-sulfur (Fe-S) centers, to quinones in the respiratory and/or the photosynthetic chain. The immediate electron acceptor for the enzyme in this species is believed to be plastoquinone. Couples the redox reaction to proton translocation, and thus conserves the redox energy in a proton gradient. Cyanobacterial NDH-1 also plays a role in inorganic carbon-concentration. The protein is NAD(P)H-quinone oxidoreductase subunit O of Acaryochloris marina (strain MBIC 11017).